We begin with the raw amino-acid sequence, 339 residues long: Phenylalanine--tRNA ligase alpha subunit (339 aa).

Glu254 contributes to the Mg(2+) binding site.

Belongs to the class-II aminoacyl-tRNA synthetase family. Phe-tRNA synthetase alpha subunit type 1 subfamily. Tetramer of two alpha and two beta subunits. It depends on Mg(2+) as a cofactor.

It localises to the cytoplasm. The catalysed reaction is tRNA(Phe) + L-phenylalanine + ATP = L-phenylalanyl-tRNA(Phe) + AMP + diphosphate + H(+). This is Phenylalanine--tRNA ligase alpha subunit from Alkaliphilus oremlandii (strain OhILAs) (Clostridium oremlandii (strain OhILAs)).